A 236-amino-acid chain; its full sequence is Rho-related GTP-binding protein RhoV (236 aa).

The tract at residues 1 to 28 is disordered; the sequence is MPPRELSEAEPPPLPASTPPPRRRSAPP. Residues 10–20 are compositionally biased toward pro residues; it reads EPPPLPASTPP. S25 bears the Phosphoserine mark. GTP-binding positions include 38–45, 85–89, and 143–146; these read GDGAVGKS, DTAGQ, and TQAD. Residue C234 is the site of S-palmitoyl cysteine attachment.

It belongs to the small GTPase superfamily. Rho family. Interacts with PAK2. Mg(2+) serves as cofactor. Highly expressed in brain and testis and at lower levels in spleen and lung.

It localises to the cell membrane. The protein resides in the endosome membrane. Plays a role in the control of the actin cytoskeleton via activation of the JNK pathway. The protein is Rho-related GTP-binding protein RhoV of Rattus norvegicus (Rat).